A 345-amino-acid polypeptide reads, in one-letter code: N-acetyl-gamma-glutamyl-phosphate reductase (345 aa).

C149 is a catalytic residue.

It belongs to the NAGSA dehydrogenase family. Type 1 subfamily.

It localises to the cytoplasm. The enzyme catalyses N-acetyl-L-glutamate 5-semialdehyde + phosphate + NADP(+) = N-acetyl-L-glutamyl 5-phosphate + NADPH + H(+). The protein operates within amino-acid biosynthesis; L-arginine biosynthesis; N(2)-acetyl-L-ornithine from L-glutamate: step 3/4. Functionally, catalyzes the NADPH-dependent reduction of N-acetyl-5-glutamyl phosphate to yield N-acetyl-L-glutamate 5-semialdehyde. This is N-acetyl-gamma-glutamyl-phosphate reductase from Bacillus thuringiensis subsp. konkukian (strain 97-27).